Consider the following 258-residue polypeptide: 2-succinyl-6-hydroxy-2,4-cyclohexadiene-1-carboxylate synthase (258 aa).

It belongs to the AB hydrolase superfamily. MenH family. As to quaternary structure, monomer.

The enzyme catalyses 5-enolpyruvoyl-6-hydroxy-2-succinyl-cyclohex-3-ene-1-carboxylate = (1R,6R)-6-hydroxy-2-succinyl-cyclohexa-2,4-diene-1-carboxylate + pyruvate. Its pathway is quinol/quinone metabolism; 1,4-dihydroxy-2-naphthoate biosynthesis; 1,4-dihydroxy-2-naphthoate from chorismate: step 3/7. It participates in quinol/quinone metabolism; menaquinone biosynthesis. In terms of biological role, catalyzes a proton abstraction reaction that results in 2,5-elimination of pyruvate from 2-succinyl-5-enolpyruvyl-6-hydroxy-3-cyclohexene-1-carboxylate (SEPHCHC) and the formation of 2-succinyl-6-hydroxy-2,4-cyclohexadiene-1-carboxylate (SHCHC). This is 2-succinyl-6-hydroxy-2,4-cyclohexadiene-1-carboxylate synthase from Enterobacter sp. (strain 638).